Reading from the N-terminus, the 124-residue chain is Ribonuclease P protein component (124 aa).

Belongs to the RnpA family. As to quaternary structure, consists of a catalytic RNA component (M1 or rnpB) and a protein subunit.

The enzyme catalyses Endonucleolytic cleavage of RNA, removing 5'-extranucleotides from tRNA precursor.. Its function is as follows. RNaseP catalyzes the removal of the 5'-leader sequence from pre-tRNA to produce the mature 5'-terminus. It can also cleave other RNA substrates such as 4.5S RNA. The protein component plays an auxiliary but essential role in vivo by binding to the 5'-leader sequence and broadening the substrate specificity of the ribozyme. The polypeptide is Ribonuclease P protein component (Maridesulfovibrio salexigens (strain ATCC 14822 / DSM 2638 / NCIMB 8403 / VKM B-1763) (Desulfovibrio salexigens)).